Consider the following 134-residue polypeptide: Ribosome-binding factor A (134 aa).

This sequence belongs to the RbfA family. As to quaternary structure, monomer. Binds 30S ribosomal subunits, but not 50S ribosomal subunits or 70S ribosomes.

It localises to the cytoplasm. One of several proteins that assist in the late maturation steps of the functional core of the 30S ribosomal subunit. Associates with free 30S ribosomal subunits (but not with 30S subunits that are part of 70S ribosomes or polysomes). Required for efficient processing of 16S rRNA. May interact with the 5'-terminal helix region of 16S rRNA. The sequence is that of Ribosome-binding factor A from Rhizobium johnstonii (strain DSM 114642 / LMG 32736 / 3841) (Rhizobium leguminosarum bv. viciae).